The chain runs to 687 residues: Ferric vulnibactin receptor VuuA (687 aa).

Residues 1-37 (MAALRPARTSVAEKKTFKLHALSAVVMGLCASGQAYA) form the signal peptide. The 123-residue stretch at 63-185 (TIYDTSSSVQ…SAGAIVMKTN (123 aa)) folds into the TBDR plug domain. The region spanning 190-687 (HFESAVKAGV…MIGASLQLNF (498 aa)) is the TBDR beta-barrel domain. Residues 670–687 (EPLKQQPRMIGASLQLNF) carry the TonB C-terminal box motif.

This sequence belongs to the TonB-dependent receptor family.

It localises to the cell outer membrane. In terms of biological role, involved in the uptake of iron in complex with vulnibactin, a catecholate siderophore synthesized by V.vulnificus. Binds and transports ferric vulnibactin across the outer membrane. The energy source is provided by the inner membrane TonB system. This is Ferric vulnibactin receptor VuuA from Vibrio vulnificus.